A 179-amino-acid polypeptide reads, in one-letter code: MTTSHDRAVLNQILNPLMPTSDSGMGEVHLESDKVDHPGYTLSSQLEREAVRLAESMNVTDAIEKFTEAIQVCPLNPSAYNNRAQAYRLQNSPEKALEDLNESLRLAGPKTKTACQAYVQRASIYRLQGDDEKARADFAAAAELGSSFAKMQMVALNPYAAMCNKMLAEVFEKAKTGDN.

3 TPR repeats span residues 43 to 76 (SSQLEREAVRLAESMNVTDAIEKFTEAIQVCPLN), 77 to 110 (PSAYNNRAQAYRLQNSPEKALEDLNESLRLAGPK), and 115 to 148 (CQAYVQRASIYRLQGDDEKARADFAAAAELGSSF).

The protein belongs to the TTC36 family.

In Caenorhabditis briggsae, this protein is Tetratricopeptide repeat protein 36.